Reading from the N-terminus, the 110-residue chain is Single-stranded DNA-binding protein 1 (110 aa).

Residues 1–104 form the SSB domain; that stretch reads MNKILLIGRM…VVGEEVQFLE (104 aa).

In terms of assembly, homotetramer.

This chain is Single-stranded DNA-binding protein 1 (ssb1), found in Clostridium acetobutylicum (strain ATCC 824 / DSM 792 / JCM 1419 / IAM 19013 / LMG 5710 / NBRC 13948 / NRRL B-527 / VKM B-1787 / 2291 / W).